Here is a 221-residue protein sequence, read N- to C-terminus: Ribosomal RNA small subunit methyltransferase Nep1 (221 aa).

S-adenosyl-L-methionine contacts are provided by residues Gly-174, Gly-179, and 196–201 (IGDETM).

Belongs to the class IV-like SAM-binding methyltransferase superfamily. RNA methyltransferase NEP1 family. As to quaternary structure, homodimer.

It carries out the reaction a pseudouridine in rRNA + S-adenosyl-L-methionine = an N(1)-methylpseudouridine in rRNA + S-adenosyl-L-homocysteine + H(+). Its function is as follows. Methyltransferase involved in ribosomal biogenesis. Specifically catalyzes the N1-methylation of the pseudouridine corresponding to position 914 in M.jannaschii 16S rRNA. In Pyrobaculum islandicum (strain DSM 4184 / JCM 9189 / GEO3), this protein is Ribosomal RNA small subunit methyltransferase Nep1.